Consider the following 448-residue polypeptide: Phosphoglucosamine mutase (448 aa).

The active-site Phosphoserine intermediate is S100. S100, D240, D242, and D244 together coordinate Mg(2+). The residue at position 100 (S100) is a Phosphoserine.

The protein belongs to the phosphohexose mutase family. It depends on Mg(2+) as a cofactor. Activated by phosphorylation.

It catalyses the reaction alpha-D-glucosamine 1-phosphate = D-glucosamine 6-phosphate. In terms of biological role, catalyzes the conversion of glucosamine-6-phosphate to glucosamine-1-phosphate. The chain is Phosphoglucosamine mutase from Bacillus velezensis (strain DSM 23117 / BGSC 10A6 / LMG 26770 / FZB42) (Bacillus amyloliquefaciens subsp. plantarum).